We begin with the raw amino-acid sequence, 195 residues long: Protein aq_1444 (195 aa).

The region spanning 1–191 (MDIRELVHLG…EKEPFGEVER (191 aa)) is the AMMECR1 domain.

The polypeptide is Protein aq_1444 (Aquifex aeolicus (strain VF5)).